The sequence spans 1186 residues: MGVQGLWKLLECSGRQVSPEALEGKILAVDISIWLNQALKGVRDRHGNSIENPHLLTLFHRLCKLLFFRIRPIFVFDGDAPLLKKQTLVKRRQRKDLASSDSRKTTEKLLKTFLKRQAIKTAFRSKRDEALPSLTQVRRENDLYVLPPLQEEEKHSSEEEDEKEWQERMNQKQALQEEFFHNPQAIDIESEDFSSLPPEVKHEILTDMKEFTKRRRTLFEAMPEESDDFSQYQLKGLLKKNYLNQHIEHVQKEMNQQHSGHIRRQYEDEGGFLKEVESRRVVSEDTSHYILIKGIQAKTVAEVDSESLPSSSKMHGMSFDVKSSPCEKLKTEKEPDATPPSPRTLLAMQAALLGSSSEEELESENRRQARGRNAPAAVDEGSISPRTLSAIKRALDDDEDVKVCAGDDVQTGGPGAEEMRINSSTENSDEGLKVRDGKGIPFTATLASSSVNSAEEHVASTNEGREPTDSVPKEQMSLVHVGTEAFPISDESMIKDRKDRLPLESAVVRHSDAPGLPNGRELTPASPTCTNSVSKNETHAEVLEQQNELCPYESKFDSSLLSSDDETKCKPNSASEVIGPVSLQETSSIVSVPSEAVDNVENVVSFNAKEHENFLETIQEQQTTESAGQDLISIPKAVEPMEIDSEESESDGSFIEVQSVISDEELQAEFPETSKPPSEQGEEELVGTREGEAPAESESLLRDNSERDDVDGEPQEAEKDAEDSLHEWQDINLEELETLESNLLAQQNSLKAQKQQQERIAATVTGQMFLESQELLRLFGIPYIQAPMEAEAQCAILDLTDQTSGTITDDSDIWLFGARHVYRNFFNKNKFVEYYQYVDFHNQLGLDRNKLINLAYLLGSDYTEGIPTVGCVTAMEILNEFPGHGLEPLLKFSEWWHEAQKNPKIRPNPHDTKVKKKLRTLQLTPGFPNPAVAEAYLKPVVDDSKGSFLWGKPDLDKIREFCQRYFGWNRTKTDESLFPVLKQLDAQQTQLRIDSFFRLAQQEKEDAKRIKSQRLNRAVTCMLRKEKEAAASEIEAVSVAMEKEFELLDKAKGKTQKRGITNTLEESSSLKRKRLSDSKGKNTCGGFLGETCLSESSDGSSSEDAESSSLMNVQRRTAAKEPKTSASDSQNSVKEAPVKNGGATTSSSSDSDDDGGKEKMVLVTARSVFGKKRRKLRRARGRKRKT.

Residues 1–78 (MGVQGLWKLL…RIRPIFVFDG (78 aa)) form an N-domain region. An N6-acetyllysine modification is found at K8. D30 contacts Mg(2+). The segment at 31–67 (ISIWLNQALKGVRDRHGNSIENPHLLTLFHRLCKLLF) is DNA-binding; may bind to the undamaged single-strand DNA of the DNA repair bubble. Mg(2+) is bound at residue D77. Positions 79 to 785 (DAPLLKKQTL…LRLFGIPYIQ (707 aa)) are spacer region. Disordered regions lie at residues 306–342 (ESLPSSSKMHGMSFDVKSSPCEKLKTEKEPDATPPSP), 354–385 (GSSSEEELESENRRQARGRNAPAAVDEGSISP), 404–473 (CAGD…SVPK), 510–533 (HSDAPGLPNGRELTPASPTCTNSV), and 667–724 (QAEF…AEDS). Over residues 325 to 336 (PCEKLKTEKEPD) the composition is skewed to basic and acidic residues. S384 is subject to Phosphoserine. Positions 454-472 (AEEHVASTNEGREPTDSVP) are enriched in basic and acidic residues. Position 705 is a phosphoserine (S705). The segment at 786-881 (APMEAEAQCA…VTAMEILNEF (96 aa)) is I-domain. The Mg(2+) site is built by E789, E791, D810, and D812. A DNA-binding; may bind to the undamaged single-strand DNA of the DNA repair bubble region spans residues 820–836 (HVYRNFFNKNKFVEYYQ). Positions 848-880 (RNKLINLAYLLGSDYTEGIPTVGCVTAMEILNE) are DNA-binding; H2TH (helix-2turn-helix) motif which binds double-stranded DNA. D861 provides a ligand contact to Mg(2+). The segment at 912–918 (TKVKKKL) is DNA-binding; may bind double-stranded DNA. An interaction with PCNA region spans residues 981–1009 (LKQLDAQQTQLRIDSFFRLAQQEKEDAKR). The segment at 1011–1186 (KSQRLNRAVT…RRARGRKRKT (176 aa)) is interaction with ERCC6/CSB. 2 disordered regions span residues 1056–1081 (QKRGITNTLEESSSLKRKRLSDSKGK) and 1095–1186 (ESSD…KRKT). Residues 1057-1074 (KRGITNTLEESSSLKRKR) carry the Nuclear localization signal 1 motif. A compositionally biased stretch (polar residues) spans 1124–1133 (TSASDSQNSV). A Nuclear localization signal 2 motif is present at residues 1169–1186 (FGKKRRKLRRARGRKRKT). The span at 1169–1186 (FGKKRRKLRRARGRKRKT) shows a compositional bias: basic residues.

The protein belongs to the XPG/RAD2 endonuclease family. XPG subfamily. In terms of assembly, monomer. Homodimer. Component of the homologous recombination repair (HR) complex composed of ERCC5/XPG, BRCA2, PALB2, DSS1 and RAD51. Within the complex, interacts with BRCA2 and PALB2. Interacts with RNA polymerase II. Interacts (via C-terminus) with ERCC6/CSB; the interaction stimulates ERCC6/CSB binding to the DNA repair bubble and ERCC6/CSB ATPase activity. May form a complex composed of RNA polymerase II, ERCC6/CSB and ERCC5/XPG which associates with the DNA repair bubble during transcription-coupled nucleotide excision repair. Interacts with BRCA1; the interaction promotes the release of BRCA1 from DNA. Interacts with PCNA. Interacts with NTHL1; the interaction stimulates NTHL1 activity and NTHL1 binding to its DNA substrate. The cofactor is Mg(2+).

The protein resides in the nucleus. Its subcellular location is the chromosome. Its function is as follows. Single-stranded structure-specific DNA endonuclease involved in DNA excision repair. Makes the 3'incision in DNA nucleotide excision repair (NER). Binds and bends DNA repair bubble substrate and breaks base stacking at the single-strand/double-strand DNA junction of the DNA bubble. Plays a role in base excision repair (BER) by promoting the binding of DNA glycosylase NTHL1 to its substrate and increasing NTHL1 catalytic activity that removes oxidized pyrimidines from DNA. Involved in transcription-coupled nucleotide excision repair (TCR) which allows RNA polymerase II-blocking lesions to be rapidly removed from the transcribed strand of active genes. Functions during the initial step of TCR in cooperation with ERCC6/CSB to recognized stalled RNA polymerase II. Also, stimulates ERCC6/CSB binding to the DNA repair bubble and ERCC6/CSB ATPase activity. Required for DNA replication fork maintenance and preservation of genomic stability. Involved in homologous recombination repair (HRR) induced by DNA replication stress by recruiting RAD51, BRCA2, and PALB2 to the damaged DNA site. In TFIIH stimulates the 5'-3' helicase activity of XPD/ERCC2 and the DNA translocase activity of XPB/ERCC3. During HRR, binds to the replication fork with high specificity and stabilizes it. Also, acts upstream of HRR, to promote the release of BRCA1 from DNA. In Homo sapiens (Human), this protein is DNA excision repair protein ERCC-5 (ERCC5).